Consider the following 73-residue polypeptide: MKAGIHPEYHTIKVVMTDGTEYETRSTWGSEGATMHLEIDSKSHPAWTGGNQQLVDRGGRVSKFKKRFEGLGL.

The protein belongs to the bacterial ribosomal protein bL31 family. Type A subfamily. In terms of assembly, part of the 50S ribosomal subunit.

Binds the 23S rRNA. The sequence is that of Large ribosomal subunit protein bL31 from Sinorhizobium fredii (strain NBRC 101917 / NGR234).